The chain runs to 147 residues: Small ribosomal subunit protein uS12 (147 aa).

It belongs to the universal ribosomal protein uS12 family. Part of the 30S ribosomal subunit.

In terms of biological role, with S4 and S5 plays an important role in translational accuracy. Located at the interface of the 30S and 50S subunits. This Methanococcus aeolicus (strain ATCC BAA-1280 / DSM 17508 / OCM 812 / Nankai-3) protein is Small ribosomal subunit protein uS12.